The primary structure comprises 176 residues: Large ribosomal subunit protein eL20A (176 aa).

It belongs to the eukaryotic ribosomal protein eL20 family. As to quaternary structure, component of the large ribosomal subunit (LSU). Mature yeast ribosomes consist of a small (40S) and a large (60S) subunit. The 40S small subunit contains 1 molecule of ribosomal RNA (18S rRNA) and at least 33 different proteins. The large 60S subunit contains 3 rRNA molecules (25S, 5.8S and 5S rRNA) and at least 46 different proteins. eL20 forms multiple interactions with RNA and proteins in the central protuberance, connecting components of core functional centers that are located far apart.

It is found in the cytoplasm. In terms of biological role, component of the ribosome, a large ribonucleoprotein complex responsible for the synthesis of proteins in the cell. The small ribosomal subunit (SSU) binds messenger RNAs (mRNAs) and translates the encoded message by selecting cognate aminoacyl-transfer RNA (tRNA) molecules. The large subunit (LSU) contains the ribosomal catalytic site termed the peptidyl transferase center (PTC), which catalyzes the formation of peptide bonds, thereby polymerizing the amino acids delivered by tRNAs into a polypeptide chain. The nascent polypeptides leave the ribosome through a tunnel in the LSU and interact with protein factors that function in enzymatic processing, targeting, and the membrane insertion of nascent chains at the exit of the ribosomal tunnel. The sequence is that of Large ribosomal subunit protein eL20A (rpl2001) from Schizosaccharomyces pombe (strain 972 / ATCC 24843) (Fission yeast).